The following is a 209-amino-acid chain: Ribosomal RNA large subunit methyltransferase E (209 aa).

S-adenosyl-L-methionine is bound by residues glycine 63, tryptophan 65, aspartate 83, aspartate 99, and aspartate 124. Lysine 164 functions as the Proton acceptor in the catalytic mechanism.

This sequence belongs to the class I-like SAM-binding methyltransferase superfamily. RNA methyltransferase RlmE family.

The protein localises to the cytoplasm. The catalysed reaction is uridine(2552) in 23S rRNA + S-adenosyl-L-methionine = 2'-O-methyluridine(2552) in 23S rRNA + S-adenosyl-L-homocysteine + H(+). Specifically methylates the uridine in position 2552 of 23S rRNA at the 2'-O position of the ribose in the fully assembled 50S ribosomal subunit. The sequence is that of Ribosomal RNA large subunit methyltransferase E from Shewanella loihica (strain ATCC BAA-1088 / PV-4).